We begin with the raw amino-acid sequence, 831 residues long: Leucine--tRNA ligase (831 aa).

The 'HIGH' region motif lies at 35–45 (PYPSGKIHVGH). The short motif at 600–604 (KMSKS) is the 'KMSKS' region element. Residue K603 participates in ATP binding.

The protein belongs to the class-I aminoacyl-tRNA synthetase family.

Its subcellular location is the cytoplasm. The catalysed reaction is tRNA(Leu) + L-leucine + ATP = L-leucyl-tRNA(Leu) + AMP + diphosphate. The sequence is that of Leucine--tRNA ligase from Rickettsia bellii (strain RML369-C).